Reading from the N-terminus, the 232-residue chain is Endonuclease V (232 aa).

Residues aspartate 43 and aspartate 109 each coordinate Mg(2+).

This sequence belongs to the endonuclease V family. Mg(2+) is required as a cofactor.

The protein localises to the cytoplasm. It catalyses the reaction Endonucleolytic cleavage at apurinic or apyrimidinic sites to products with a 5'-phosphate.. DNA repair enzyme involved in the repair of deaminated bases. Selectively cleaves double-stranded DNA at the second phosphodiester bond 3' to a deoxyinosine leaving behind the intact lesion on the nicked DNA. In Thermofilum pendens (strain DSM 2475 / Hrk 5), this protein is Endonuclease V.